We begin with the raw amino-acid sequence, 1450 residues long: ABC transporter G family member 37 (1450 aa).

The ABC transporter 1 domain occupies 158 to 431 (GNALHILPNK…FEFMGFRCPA (274 aa)). Residue 191–198 (GPPGSGKT) participates in ATP binding. In terms of domain architecture, ABC transmembrane type-2 1 spans 509–721 (ELLKATIDRE…AQNAISTNEF (213 aa)). 6 helical membrane passes run 527-547 (FMYI…MTTF), 559-579 (GMIY…NGFA), 614-634 (IPIT…VIGF), 646-666 (LLLL…AGIG), 670-690 (VVSH…GGFI), and 756-776 (IGLG…TVAL). An ABC transporter 2 domain is found at 852-1104 (ISFNDVRYSV…KLIEYFEGID (253 aa)). Residue 897 to 904 (GVSGAGKT) participates in ATP binding. The 215-residue stretch at 1177–1391 (TQCLACLWKQ…TLYGLVASQF (215 aa)) folds into the ABC transmembrane type-2 2 domain. The next 7 helical transmembrane spans lie at 1198–1218 (AVRL…FWNL), 1236–1256 (YAAV…VVVV), 1284–1304 (LPYI…MIGF), 1311–1331 (FLWY…YGMM), 1341–1361 (IAAI…GYLI), 1372–1392 (WYCW…SQFG), and 1422–1442 (VVAV…SFAI).

Belongs to the ABC transporter superfamily. ABCG family. PDR (TC 3.A.1.205) subfamily.

The protein resides in the membrane. In terms of biological role, may be a general defense protein. The polypeptide is ABC transporter G family member 37 (Oryza sativa subsp. japonica (Rice)).